A 261-amino-acid polypeptide reads, in one-letter code: Protein unc-50 homolog (261 aa).

Transmembrane regions (helical) follow at residues 37–57, 82–102, 113–133, 166–186, 190–210, and 225–245; these read IFHY…YLCF, AFAV…AITF, VMFW…ATIG, SFFP…PILL, LFAA…YYYV, and VVFL…VVMG.

It belongs to the unc-50 family.

Its subcellular location is the membrane. The chain is Protein unc-50 homolog from Dictyostelium discoideum (Social amoeba).